Consider the following 157-residue polypeptide: MGIINIILTLIEDMILAAIPAVGFAMVFNVPLRALKYCALLGAIGHGSRTVLMISGMNIEWASFCAAILVGCIGIQWSRWWLAHPKVFTVAAIIPMFPGINAYVAMISVVKLTQIGYSEEIFEALVTNFLKASFIVGALSIGLSLPGLWLYRKRPSV.

4 consecutive transmembrane segments (helical) span residues 6–26 (IILTLIEDMILAAIPAVGFAM), 51–71 (VLMISGMNIEWASFCAAILVG), 87–107 (VFTVAAIIPMFPGINAYVAMI), and 129–149 (FLKASFIVGALSIGLSLPGLW).

The protein belongs to the ThrE exporter (TC 2.A.79) family. As to quaternary structure, the transporter is composed of YjjB and YjjP.

It localises to the cell inner membrane. Its function is as follows. Involved in succinate export with YjjP. Both proteins are required for export. The chain is Probable succinate transporter subunit YjjB from Proteus mirabilis (strain HI4320).